The sequence spans 186 residues: ATP synthase subunit b, chloroplastic (186 aa).

Residues isoleucine 27–leucine 43 traverse the membrane as a helical segment.

The protein belongs to the ATPase B chain family. As to quaternary structure, F-type ATPases have 2 components, F(1) - the catalytic core - and F(0) - the membrane proton channel. F(1) has five subunits: alpha(3), beta(3), gamma(1), delta(1), epsilon(1). F(0) has four main subunits: a(1), b(1), b'(1) and c(10-14). The alpha and beta chains form an alternating ring which encloses part of the gamma chain. F(1) is attached to F(0) by a central stalk formed by the gamma and epsilon chains, while a peripheral stalk is formed by the delta, b and b' chains.

The protein localises to the plastid. Its subcellular location is the chloroplast thylakoid membrane. Functionally, f(1)F(0) ATP synthase produces ATP from ADP in the presence of a proton or sodium gradient. F-type ATPases consist of two structural domains, F(1) containing the extramembraneous catalytic core and F(0) containing the membrane proton channel, linked together by a central stalk and a peripheral stalk. During catalysis, ATP synthesis in the catalytic domain of F(1) is coupled via a rotary mechanism of the central stalk subunits to proton translocation. In terms of biological role, component of the F(0) channel, it forms part of the peripheral stalk, linking F(1) to F(0). In Mesostigma viride (Green alga), this protein is ATP synthase subunit b, chloroplastic.